We begin with the raw amino-acid sequence, 217 residues long: Small ribosomal subunit protein uS3c (217 aa).

A KH type-2 domain is found at 43–117 (IKNYVQKNKR…KLNIAITRIA (75 aa)).

It belongs to the universal ribosomal protein uS3 family. As to quaternary structure, part of the 30S ribosomal subunit.

Its subcellular location is the plastid. The protein localises to the chloroplast. This Platanus occidentalis (Sycamore) protein is Small ribosomal subunit protein uS3c (rps3).